A 323-amino-acid chain; its full sequence is Cyclin-H (323 aa).

A Phosphoserine; by CDK8 modification is found at serine 5. Serine 132 bears the Phosphoserine mark. A disordered region spans residues 297-323; that stretch reads YEDDDYVSKKSKHEEEEWTDDDLVESL. The segment covering 302–311 has biased composition (basic and acidic residues); the sequence is YVSKKSKHEE. Position 304 is a phosphoserine; by CDK8 (serine 304). A compositionally biased stretch (acidic residues) spans 312–323; that stretch reads EEWTDDDLVESL. A Phosphothreonine modification is found at threonine 315. Serine 322 is subject to Phosphoserine.

It belongs to the cyclin family. Cyclin C subfamily. In terms of assembly, associates primarily with CDK7 and MAT1 to form the CAK complex. CAK can further associate with the core-TFIIH to form the TFIIH basal transcription factor.

It is found in the nucleus. Regulates CDK7, the catalytic subunit of the CDK-activating kinase (CAK) enzymatic complex. CAK activates the cyclin-associated kinases CDK1, CDK2, CDK4 and CDK6 by threonine phosphorylation. CAK complexed to the core-TFIIH basal transcription factor activates RNA polymerase II by serine phosphorylation of the repetitive C-terminal domain (CTD) of its large subunit (POLR2A), allowing its escape from the promoter and elongation of the transcripts. Involved in cell cycle control and in RNA transcription by RNA polymerase II. Its expression and activity are constant throughout the cell cycle. This Homo sapiens (Human) protein is Cyclin-H (CCNH).